The primary structure comprises 365 residues: Mannose-1-phosphate guanylyltransferase catalytic subunit beta (365 aa).

Residues 2-221 are substrate-binding domain; sequence KALILVGGYG…PGFWMDVGQP (220 aa). D109 contributes to the GDP-alpha-D-mannose binding site. D109 serves as a coordination point for Mg(2+). The active site involves K161. D217 contacts GDP-alpha-D-mannose. D217 serves as a coordination point for Mg(2+). A hexapeptide repeat domain region spans residues 244-365; it reads ETGSNIHPTA…VNVPSKDIIM (122 aa).

The protein belongs to the transferase hexapeptide repeat family. Component of the GMPPA-GMPPB mannose-1-phosphate guanylyltransferase complex composed of 4 GMPPA subunits and 8 tag-335/GMPPB subunits; the complex is organized into three layers, a central layer made up of 2 GMPPA dimers sandwiched between two layers each made up of 2 tag-335/GMPPB dimers. Catalytic activity of tag-335/GMPPB is reduced when part of the complex and binding of GDP-alpha-D-Mannose by GMPPA induces allosteric feedback inhibition of tag-335/GMPPB. Mg(2+) is required as a cofactor.

It carries out the reaction alpha-D-mannose 1-phosphate + GTP + H(+) = GDP-alpha-D-mannose + diphosphate. It functions in the pathway nucleotide-sugar biosynthesis; GDP-alpha-D-mannose biosynthesis; GDP-alpha-D-mannose from alpha-D-mannose 1-phosphate (GTP route): step 1/1. Enzyme activity is reduced by incorporation into the GMPPA-GMPPB mannose-1-phosphate guanylyltransferase complex. Allosterically inhibited, when part of the GMPPA-GMPPB complex, by GDP-alpha-D-mannose binding to GMPPA. In terms of biological role, catalytic subunit of the GMPPA-GMPPB mannose-1-phosphate guanylyltransferase complex. Catalyzes the formation of GDP-mannose, an essential precursor of glycan moieties of glycoproteins and glycolipids. Can catalyze the reverse reaction in vitro. Together with GMPPA regulates GDP-alpha-D-mannose levels. The polypeptide is Mannose-1-phosphate guanylyltransferase catalytic subunit beta (tag-335) (Caenorhabditis elegans).